A 504-amino-acid chain; its full sequence is Pre-mRNA-processing factor 19 (504 aa).

S2 is subject to N-acetylserine. In terms of domain architecture, U-box spans 2-73 (SLICSISNEV…KPPSATSIPA (72 aa)). The may mediate interaction with PSMC5 stretch occupies residues 68–223 (ATSIPAILKA…VGLHSASIPG (156 aa)). 4 positions are modified to N6-acetyllysine: K122, K179, K244, and K261. One copy of the WD 1 repeat lies at 219–259 (ASIPGILALDLCPSDTNKILTGGADKNVVVFDKSSEQILAT). 6 WD repeats span residues 262–301 (GHTKKVTSVVFHPSQDLVFSASPDATIRIWSVPNASCVQV), 304–345 (AHES…TKVT), 348–387 (TSGCSLTCAQFHPDGLIFGTGTMDSQIKIWDLKERTNVAN), 390–429 (GHSGPITSIAFSENGYYLATAADDSSVKLWDLRKLKNFKT), 433–472 (DNNFEVKSLIFDQSGTYLALGGTDVQIYICKQWTEILHFT), and 473–503 (EHSGLTTGVAFGHHAKFIASTGMDRSLKFYS).

It belongs to the WD repeat PRP19 family. Homotetramer. Component of activated, catalytic and post-catalytic spliceosomes. Component of the Prp19 complex/PRP19C/Nineteen complex/NTC and related complexes described as PRP19-CDC5L splicing complex and PSO4 complex. A homotetramer of PRPF19, CDC5L, PLRG1 and BCAS2 constitute the core of those complexes. The interaction with CDC5L, PLRG1 and BCAS2 is direct within this core complex. At least three less stably associated proteins CTNNBL1, CWC15 and HSPA8 are found in the Prp19 complex. The Prp19 complex associates with the spliceosome during its assembly and remodeling recruiting additional proteins. Component of the XAB2 complex, a multimeric protein complex composed of XAB2, PRPF19, AQR, ZNF830, ISY1, and PPIE. Interacts with CWC22 and EIF4A3 in an RNA-independent manner. Interacts with RPA1 and RPA2; the PRP19-CDC5L complex is recruited to the sites of DNA repair where it interacts with the replication protein A complex (RPA). Interacts with SETMAR; required for SETMAR recruitment to site of DNA damage. Interacts with U2AF2; the interaction is direct and recruits the Prp19 complex to RNA polymerase II C-terminal domain (CTD) and the pre-mRNA. Interacts with PRPF3. Interacts with APEX1, DNTT and PSMB4. Interacts with PSMC5. Interacts with KNSTRN. Interacts (via N-terminus) with CDC5L. Interacts with KHDC4. Interacts with USB1. Interacts with DDX41. In terms of tissue distribution, ubiquitous. Weakly expressed in senescent cells of different tissue origins. Highly expressed in tumor cell lines.

The protein localises to the nucleus. The protein resides in the nucleoplasm. Its subcellular location is the cytoplasm. It is found in the cytoskeleton. It localises to the spindle. The protein localises to the lipid droplet. The enzyme catalyses S-ubiquitinyl-[E2 ubiquitin-conjugating enzyme]-L-cysteine + [acceptor protein]-L-lysine = [E2 ubiquitin-conjugating enzyme]-L-cysteine + N(6)-ubiquitinyl-[acceptor protein]-L-lysine.. It functions in the pathway protein modification; protein ubiquitination. Functionally, ubiquitin-protein ligase which is a core component of several complexes mainly involved pre-mRNA splicing and DNA repair. Required for pre-mRNA splicing as component of the spliceosome. Core component of the PRP19C/Prp19 complex/NTC/Nineteen complex which is part of the spliceosome and participates in its assembly, its remodeling and is required for its activity. During assembly of the spliceosome, mediates 'Lys-63'-linked polyubiquitination of the U4 spliceosomal protein PRPF3. Ubiquitination of PRPF3 allows its recognition by the U5 component PRPF8 and stabilizes the U4/U5/U6 tri-snRNP spliceosomal complex. Recruited to RNA polymerase II C-terminal domain (CTD) and the pre-mRNA, it may also couple the transcriptional and spliceosomal machineries. The XAB2 complex, which contains PRPF19, is also involved in pre-mRNA splicing, transcription and transcription-coupled repair. Beside its role in pre-mRNA splicing PRPF19, as part of the PRP19-CDC5L complex, plays a role in the DNA damage response/DDR. It is recruited to the sites of DNA damage by the RPA complex where PRPF19 directly ubiquitinates RPA1 and RPA2. 'Lys-63'-linked polyubiquitination of the RPA complex allows the recruitment of the ATR-ATRIP complex and the activation of ATR, a master regulator of the DNA damage response. May also play a role in DNA double-strand break (DSB) repair by recruiting the repair factor SETMAR to altered DNA. As part of the PSO4 complex may also be involved in the DNA interstrand cross-links/ICLs repair process. In addition, may also mediate 'Lys-48'-linked polyubiquitination of substrates and play a role in proteasomal degradation. May play a role in the biogenesis of lipid droplets. May play a role in neural differentiation possibly through its function as part of the spliceosome. This chain is Pre-mRNA-processing factor 19, found in Homo sapiens (Human).